A 188-amino-acid chain; its full sequence is Adenylate kinase (188 aa).

12–17 (GSGKTT) is an ATP binding site. The interval 33–62 (STGDLLRAEVASGSELGKKIDSFISKGNLV) is NMP. Residues Thr-34, Arg-39, 60-62 (NLV), 87-90 (GYPR), and Gln-94 contribute to the AMP site. An LID region spans residues 129–135 (GRARGAD). Arg-130 is an ATP binding site. AMP contacts are provided by Arg-132 and Arg-144. Residue Arg-172 participates in ATP binding.

The protein belongs to the adenylate kinase family. As to quaternary structure, monomer.

The protein localises to the cytoplasm. The enzyme catalyses AMP + ATP = 2 ADP. It participates in purine metabolism; AMP biosynthesis via salvage pathway; AMP from ADP: step 1/1. Catalyzes the reversible transfer of the terminal phosphate group between ATP and AMP. Plays an important role in cellular energy homeostasis and in adenine nucleotide metabolism. The chain is Adenylate kinase from Campylobacter curvus (strain 525.92).